Consider the following 134-residue polypeptide: Large ribosomal subunit protein bL21 (134 aa).

Belongs to the bacterial ribosomal protein bL21 family. Part of the 50S ribosomal subunit. Contacts protein L20.

Functionally, this protein binds to 23S rRNA in the presence of protein L20. In Pelagibacter ubique (strain HTCC1062), this protein is Large ribosomal subunit protein bL21.